The primary structure comprises 320 residues: Acetyl-coenzyme A carboxylase carboxyl transferase subunit alpha (320 aa).

Positions 41–295 (SIEEKAAQAL…GDAIAGALND (255 aa)) constitute a CoA carboxyltransferase C-terminal domain.

It belongs to the AccA family. Acetyl-CoA carboxylase is a heterohexamer composed of biotin carboxyl carrier protein (AccB), biotin carboxylase (AccC) and two subunits each of ACCase subunit alpha (AccA) and ACCase subunit beta (AccD).

The protein localises to the cytoplasm. It catalyses the reaction N(6)-carboxybiotinyl-L-lysyl-[protein] + acetyl-CoA = N(6)-biotinyl-L-lysyl-[protein] + malonyl-CoA. Its pathway is lipid metabolism; malonyl-CoA biosynthesis; malonyl-CoA from acetyl-CoA: step 1/1. Component of the acetyl coenzyme A carboxylase (ACC) complex. First, biotin carboxylase catalyzes the carboxylation of biotin on its carrier protein (BCCP) and then the CO(2) group is transferred by the carboxyltransferase to acetyl-CoA to form malonyl-CoA. This Nitrobacter winogradskyi (strain ATCC 25391 / DSM 10237 / CIP 104748 / NCIMB 11846 / Nb-255) protein is Acetyl-coenzyme A carboxylase carboxyl transferase subunit alpha.